The chain runs to 190 residues: Elongation factor P-like protein (190 aa).

Belongs to the elongation factor P family.

The polypeptide is Elongation factor P-like protein (Shigella dysenteriae serotype 1 (strain Sd197)).